A 522-amino-acid polypeptide reads, in one-letter code: Alanine aminotransferase 2 (522 aa).

An N6-(pyridoxal phosphate)lysine modification is found at K340. 3 positions are modified to N6-acetyllysine: K414, K504, and K511.

It belongs to the class-I pyridoxal-phosphate-dependent aminotransferase family. Alanine aminotransferase subfamily. In terms of assembly, homodimer. The cofactor is pyridoxal 5'-phosphate. Specifically induced in fatty liver. Highly expressed in muscle, liver and white adipose tissue. Moderately expressed in brain and kidney and expressed at low levels in the heart.

It catalyses the reaction L-alanine + 2-oxoglutarate = pyruvate + L-glutamate. It functions in the pathway amino-acid degradation; L-alanine degradation via transaminase pathway; pyruvate from L-alanine: step 1/1. Functionally, catalyzes the reversible transamination between alanine and 2-oxoglutarate to form pyruvate and glutamate. The polypeptide is Alanine aminotransferase 2 (Gpt2) (Mus musculus (Mouse)).